The following is a 253-amino-acid chain: Triosephosphate isomerase (253 aa).

9–11 (NWK) lines the substrate pocket. H97 (electrophile) is an active-site residue. The active-site Proton acceptor is E169. Substrate is bound by residues G175, S215, and 236–237 (GG).

Belongs to the triosephosphate isomerase family. Homodimer.

The protein localises to the cytoplasm. It carries out the reaction D-glyceraldehyde 3-phosphate = dihydroxyacetone phosphate. It participates in carbohydrate biosynthesis; gluconeogenesis. The protein operates within carbohydrate degradation; glycolysis; D-glyceraldehyde 3-phosphate from glycerone phosphate: step 1/1. Involved in the gluconeogenesis. Catalyzes stereospecifically the conversion of dihydroxyacetone phosphate (DHAP) to D-glyceraldehyde-3-phosphate (G3P). The protein is Triosephosphate isomerase of Staphylococcus aureus (strain Mu50 / ATCC 700699).